The sequence spans 440 residues: Asparagine--tRNA ligase (440 aa).

The protein belongs to the class-II aminoacyl-tRNA synthetase family. In terms of assembly, homodimer.

It localises to the cytoplasm. The enzyme catalyses tRNA(Asn) + L-asparagine + ATP = L-asparaginyl-tRNA(Asn) + AMP + diphosphate + H(+). The sequence is that of Asparagine--tRNA ligase from Roseiflexus sp. (strain RS-1).